The sequence spans 561 residues: Transmembrane protein 209 (561 aa).

A phosphoserine mark is found at S9 and S11. Residues 28–48 (VVLAWGLLNVSMAGMIYTEMT) traverse the membrane as a helical segment. N57 carries an N-linked (GlcNAc...) asparagine glycan. A helical membrane pass occupies residues 60–80 (YWPLWYIELALASLFSLNALF). The residue at position 98 (S98) is a Phosphoserine. Disordered regions lie at residues 120–156 (LAAT…KFAT) and 196–233 (SLSP…TDKE). The segment covering 138–152 (SVLSYSPSRSPSTSP) has biased composition (low complexity). S201 and S248 each carry phosphoserine. Residues 250–270 (EEKQHRVKLGSPDSTSPSTSP) form a disordered region. A compositionally biased stretch (low complexity) spans 260–270 (SPDSTSPSTSP). N274 carries N-linked (GlcNAc...) asparagine glycosylation. The residue at position 278 (S278) is a Phosphoserine.

As to quaternary structure, interacts with NUP205.

It is found in the membrane. The protein resides in the nucleus envelope. It localises to the golgi apparatus. The protein localises to the cytoplasm. Nuclear envelope protein which in association with NUP205, may be involved in nuclear transport of various nuclear proteins in addition to MYC. The chain is Transmembrane protein 209 (Tmem209) from Rattus norvegicus (Rat).